Reading from the N-terminus, the 153-residue chain is MKHARQAKILEIIDKEVIETQEEIADRLKKAGMEVTQATISRDIKELRLIKVMTEDGRYKYAPFNSTDNTVFNRLMTVFSKSYVSSDYANNIVVVKTLPGMAPAAASAIDSMNYPEIVGSIAGDDTVLIVCRSEKIAKEFVEKLSKLAKSDDK.

The protein belongs to the ArgR family.

It is found in the cytoplasm. It participates in amino-acid biosynthesis; L-arginine biosynthesis [regulation]. Functionally, regulates arginine biosynthesis genes. The protein is Arginine repressor of Acetivibrio thermocellus (strain ATCC 27405 / DSM 1237 / JCM 9322 / NBRC 103400 / NCIMB 10682 / NRRL B-4536 / VPI 7372) (Clostridium thermocellum).